Consider the following 281-residue polypeptide: MITSAHIDDIRTQVRAWRAKGETVAFVPTMGNLHQGHITLVKEAASKCDHVVASIFVNPMQFGQNEDLDAYPRTLAADSEALTAAGAELLFTPTPTVMYPKGLEQQTYVEVPGISNVLCGASRPGHFRGVATIVCKLFNIVQPDVALFGNKDYQQLLVIKTMVEDLSLPIEIIGVDTIREDSGLAMSSRNGYLTAAEKAAAPALKQAIDAMAAGIKQGESFEQMTEQAKACLVAAGFTPDYLEIRHAHTLEQAQNQDHALVILAAAYIGKARLIDNLRFDR.

M30–H37 provides a ligand contact to ATP. Residue H37 is the Proton donor of the active site. Q61 serves as a coordination point for (R)-pantoate. Residue Q61 coordinates beta-alanine. G149 to D152 contributes to the ATP binding site. Residue Q155 coordinates (R)-pantoate. ATP contacts are provided by residues I178 and M186–R189.

Belongs to the pantothenate synthetase family. As to quaternary structure, homodimer.

It is found in the cytoplasm. The enzyme catalyses (R)-pantoate + beta-alanine + ATP = (R)-pantothenate + AMP + diphosphate + H(+). It functions in the pathway cofactor biosynthesis; (R)-pantothenate biosynthesis; (R)-pantothenate from (R)-pantoate and beta-alanine: step 1/1. Functionally, catalyzes the condensation of pantoate with beta-alanine in an ATP-dependent reaction via a pantoyl-adenylate intermediate. The protein is Pantothenate synthetase of Shewanella baltica (strain OS185).